A 283-amino-acid chain; its full sequence is Acetylglutamate kinase (283 aa).

Substrate is bound by residues 64 to 65 (GG), Arg-86, and Asn-181.

Belongs to the acetylglutamate kinase family. ArgB subfamily.

It is found in the cytoplasm. It carries out the reaction N-acetyl-L-glutamate + ATP = N-acetyl-L-glutamyl 5-phosphate + ADP. Its pathway is amino-acid biosynthesis; L-arginine biosynthesis; N(2)-acetyl-L-ornithine from L-glutamate: step 2/4. In terms of biological role, catalyzes the ATP-dependent phosphorylation of N-acetyl-L-glutamate. This chain is Acetylglutamate kinase, found in Sulfurovum sp. (strain NBC37-1).